Here is a 711-residue protein sequence, read N- to C-terminus: Interferon-induced GTP-binding protein Mx2 (711 aa).

Positions 115 to 387 (DLALPAIAVI…LILHINKSLP (273 aa)) constitute a Dynamin-type G domain. The interval 125 to 132 (GDQSSGKS) is G1 motif. GTP is bound at residue 125–132 (GDQSSGKS). The tract at residues 150 to 152 (VTR) is G2 motif. A G3 motif region spans residues 225–228 (DLPG). GTP-binding positions include 225 to 229 (DLPGI) and 294 to 297 (TKPD). The interval 294 to 297 (TKPD) is G4 motif. Residues 326–329 (RCRG) form a G5 motif region. The GED domain occupies 623–711 (NDEIGVHLNA…ARRALYMFFS (89 aa)).

It belongs to the TRAFAC class dynamin-like GTPase superfamily. Dynamin/Fzo/YdjA family.

It is found in the cytoplasm. The protein localises to the nucleus. Its function is as follows. Interferon-induced dynamin-like GTPase with antiviral activity against vesicular stomatitis virus (VSV). The protein is Interferon-induced GTP-binding protein Mx2 (MX2) of Canis lupus familiaris (Dog).